The following is a 390-amino-acid chain: 5-hydroxytryptamine receptor 1B (390 aa).

Over 1-46 (MEEPGAQCAPPLAAGSQIAVPQANLSAAHSHNCSAEGYIYQDSIAL) the chain is Extracellular. N-linked (GlcNAc...) asparagine glycosylation is found at asparagine 24 and asparagine 32. Residues 47–72 (PWKVLLVLLLALFTLATTLSNAFVVA) form a helical membrane-spanning segment. At 73–86 (TVYRTRKLHTPANY) the chain is on the cytoplasmic side. The helical transmembrane segment at 87–111 (LIASLAVTDLLVSILVMPISTMYTV) threads the bilayer. Residues 112–119 (TGRWTLGQ) lie on the Extracellular side of the membrane. The chain crosses the membrane as a helical span at residues 120 to 145 (VVCDLWLSSDITCCTASIMHLCVIAL). Residues cysteine 122 and cysteine 199 are joined by a disulfide bond. Ergotamine contacts are provided by aspartate 129 and threonine 134. A DRY motif; important for ligand-induced conformation changes and signaling motif is present at residues 146–148 (DRY). Topologically, residues 146 to 165 (DRYWAITDAVEYSAKRTPKR) are cytoplasmic. A helical membrane pass occupies residues 166 to 184 (AAIMIRLVWVFSICISLPP). Over 185–205 (FFWRQAKAEEEVSECLVNTDH) the chain is Extracellular. Valine 201 is a binding site for ergotamine. A helical transmembrane segment spans residues 206–229 (VLYTVYSTVGAFYLPTLLLIALYG). The Cytoplasmic portion of the chain corresponds to 230–315 (RIYVEARSRI…AARERKATKT (86 aa)). Positions 260–272 (SPGSTTSVTSINS) are enriched in polar residues. Residues 260-282 (SPGSTTSVTSINSRAPDVPSESG) form a disordered region. A helical transmembrane segment spans residues 316 to 337 (LGIILGVFIVCWLPFFIISLVM). Over 338 to 347 (PICKDACWFH) the chain is Extracellular. The chain crosses the membrane as a helical span at residues 348 to 370 (QAIFDFFTWLGYVNSLINPIIYT). Residues 365–369 (NPIIY) carry the NPxxY motif; important for ligand-induced conformation changes and signaling motif. The Cytoplasmic segment spans residues 371-390 (MSNEDFKQAFHKLIRFKCTS). A lipid anchor (S-palmitoyl cysteine) is attached at cysteine 388.

The protein belongs to the G-protein coupled receptor 1 family. As to quaternary structure, homodimer. Heterodimer with HTR1D. In terms of processing, phosphorylated. Desensitization of the receptor may be mediated by its phosphorylation. Palmitoylated.

The protein localises to the cell membrane. G-protein coupled receptor for 5-hydroxytryptamine (serotonin). Also functions as a receptor for ergot alkaloid derivatives, various anxiolytic and antidepressant drugs and other psychoactive substances, such as lysergic acid diethylamide (LSD). Ligand binding causes a conformation change that triggers signaling via guanine nucleotide-binding proteins (G proteins) and modulates the activity of downstream effectors, such as adenylate cyclase. HTR1B is coupled to G(i)/G(o) G alpha proteins and mediates inhibitory neurotransmission by inhibiting adenylate cyclase activity. Arrestin family members inhibit signaling via G proteins and mediate activation of alternative signaling pathways. Regulates the release of 5-hydroxytryptamine, dopamine and acetylcholine in the brain, and thereby affects neural activity, nociceptive processing, pain perception, mood and behavior. Besides, plays a role in vasoconstriction of cerebral arteries. This Oryctolagus cuniculus (Rabbit) protein is 5-hydroxytryptamine receptor 1B (HTR1B).